We begin with the raw amino-acid sequence, 968 residues long: Glycine dehydrogenase (decarboxylating) (968 aa).

Lysine 712 carries the post-translational modification N6-(pyridoxal phosphate)lysine.

Belongs to the GcvP family. In terms of assembly, the glycine cleavage system is composed of four proteins: P, T, L and H. It depends on pyridoxal 5'-phosphate as a cofactor.

It catalyses the reaction N(6)-[(R)-lipoyl]-L-lysyl-[glycine-cleavage complex H protein] + glycine + H(+) = N(6)-[(R)-S(8)-aminomethyldihydrolipoyl]-L-lysyl-[glycine-cleavage complex H protein] + CO2. Functionally, the glycine cleavage system catalyzes the degradation of glycine. The P protein binds the alpha-amino group of glycine through its pyridoxal phosphate cofactor; CO(2) is released and the remaining methylamine moiety is then transferred to the lipoamide cofactor of the H protein. This is Glycine dehydrogenase (decarboxylating) from Prochlorococcus marinus (strain NATL1A).